Consider the following 740-residue polypeptide: Probable type IV piliation system protein DR_0774 (740 aa).

An N-terminal signal peptide occupies residues 1–20 (MNKRHALLLTAVLGMATAYA).

Belongs to the bacterial secretin family.

It localises to the cell envelope. Could be part of the type IV piliation system (T4P). May contribute at the cohesion between the S-layer and the outer membrane by forming oligomers. Could also be the main channel through which trafficking is managed. The polypeptide is Probable type IV piliation system protein DR_0774 (Deinococcus radiodurans (strain ATCC 13939 / DSM 20539 / JCM 16871 / CCUG 27074 / LMG 4051 / NBRC 15346 / NCIMB 9279 / VKM B-1422 / R1)).